Here is a 302-residue protein sequence, read N- to C-terminus: Proline dehydrogenase 1 (302 aa).

Lys95 contacts substrate. Asp129 is an active-site residue. 2 residues coordinate FAD: Met130 and Gln158. Arg179 is an active-site residue. Residues Lys182–Ala184 and Thr221–His222 each bind FAD. Arg283–Arg284 contacts substrate.

The protein belongs to the proline oxidase family. FAD is required as a cofactor.

It carries out the reaction L-proline + a quinone = (S)-1-pyrroline-5-carboxylate + a quinol + H(+). It participates in amino-acid degradation; L-proline degradation into L-glutamate; L-glutamate from L-proline: step 1/2. Converts proline to delta-1-pyrroline-5-carboxylate. The protein is Proline dehydrogenase 1 (fadM) of Bacillus subtilis subsp. natto.